A 242-amino-acid chain; its full sequence is Cytochrome c oxidase subunit 2 (242 aa).

The Mitochondrial intermembrane segment spans residues 7-33; the sequence is DVPVPYGLYFQDSATPTFDGIIELHDI. The helical transmembrane segment at 34 to 55 threads the bilayer; that stretch reads VMFYIVVTIVLVSYLLFVIIKN. Residues 56 to 73 are Mitochondrial matrix-facing; it reads FSNDHISYKYLTHGTTLE. Residues 74–98 traverse the membrane as a helical segment; that stretch reads IVWTIFPVVILLFIAFPSFILLYLC. The Mitochondrial intermembrane segment spans residues 99-242; sequence DEVIDPAMTI…DKFLSWLDEQ (144 aa). Cu cation is bound by residues His-177, Cys-212, Glu-214, Cys-216, His-220, and Met-223. A Mg(2+)-binding site is contributed by Glu-214.

This sequence belongs to the cytochrome c oxidase subunit 2 family. Component of the cytochrome c oxidase (complex IV, CIV), a multisubunit enzyme composed of a catalytic core of 3 subunits and several supernumerary subunits. The complex exists as a monomer or a dimer and forms supercomplexes (SCs) in the inner mitochondrial membrane with ubiquinol-cytochrome c oxidoreductase (cytochrome b-c1 complex, complex III, CIII). Requires Cu cation as cofactor. The signal sequence of COX2 is processed by IMP1.

The protein localises to the mitochondrion inner membrane. It catalyses the reaction 4 Fe(II)-[cytochrome c] + O2 + 8 H(+)(in) = 4 Fe(III)-[cytochrome c] + 2 H2O + 4 H(+)(out). In terms of biological role, component of the cytochrome c oxidase, the last enzyme in the mitochondrial electron transport chain which drives oxidative phosphorylation. The respiratory chain contains 3 multisubunit complexes succinate dehydrogenase (complex II, CII), ubiquinol-cytochrome c oxidoreductase (cytochrome b-c1 complex, complex III, CIII) and cytochrome c oxidase (complex IV, CIV), that cooperate to transfer electrons derived from NADH and succinate to molecular oxygen, creating an electrochemical gradient over the inner membrane that drives transmembrane transport and the ATP synthase. Cytochrome c oxidase is the component of the respiratory chain that catalyzes the reduction of oxygen to water. Electrons originating from reduced cytochrome c in the intermembrane space (IMS) are transferred via the dinuclear copper A center (CU(A)) of subunit 2 and heme A of subunit 1 to the active site in subunit 1, a binuclear center (BNC) formed by heme A3 and copper B (CU(B)). The BNC reduces molecular oxygen to 2 water molecules using 4 electrons from cytochrome c in the IMS and 4 protons from the mitochondrial matrix. This is Cytochrome c oxidase subunit 2 (COX2) from Yarrowia lipolytica (strain CLIB 122 / E 150) (Yeast).